The sequence spans 61 residues: Large ribosomal subunit protein bL32 (61 aa).

A compositionally biased stretch (basic residues) spans 1-16 (MAVPKRKTSPSRRGMR). A disordered region spans residues 1–61 (MAVPKRKTSP…RQILKPKAEA (61 aa)). Residues 28 to 44 (VEDKDSGELRRPHHLDL) are compositionally biased toward basic and acidic residues.

The protein belongs to the bacterial ribosomal protein bL32 family.

The protein is Large ribosomal subunit protein bL32 of Xanthobacter autotrophicus (strain ATCC BAA-1158 / Py2).